The following is a 251-amino-acid chain: Hydroxyacylglutathione hydrolase (251 aa).

Residues H53, H55, D57, H58, H110, D127, and H165 each contribute to the Zn(2+) site.

The protein belongs to the metallo-beta-lactamase superfamily. Glyoxalase II family. Monomer. Requires Zn(2+) as cofactor.

It catalyses the reaction an S-(2-hydroxyacyl)glutathione + H2O = a 2-hydroxy carboxylate + glutathione + H(+). The protein operates within secondary metabolite metabolism; methylglyoxal degradation; (R)-lactate from methylglyoxal: step 2/2. Its function is as follows. Thiolesterase that catalyzes the hydrolysis of S-D-lactoyl-glutathione to form glutathione and D-lactic acid. This Yersinia enterocolitica serotype O:8 / biotype 1B (strain NCTC 13174 / 8081) protein is Hydroxyacylglutathione hydrolase.